The primary structure comprises 373 residues: Glutamine synthetase (373 aa).

Positions 24-106 (EKVQAMYIWI…VLCEVFKYNR (83 aa)) constitute a GS beta-grasp domain. The GS catalytic domain maps to 113 to 373 (LRHTCRRIMD…TGDEPFEYKN (261 aa)). Glu134 serves as a coordination point for ATP. The Mn(2+) site is built by Glu134, Glu136, Glu196, and Glu203. 203–208 (EFQVGP) contributes to the ATP binding site. An L-glutamate-binding site is contributed by 246–247 (NW). Mn(2+) is bound at residue His253. ATP-binding positions include 255 to 257 (NFS), Arg319, and Arg324. Arg319 serves as a coordination point for L-glutamate. 336-338 (YFE) lines the ADP pocket. Glu338 contacts Mn(2+). Arg340 contacts L-glutamate.

It belongs to the glutamine synthetase family. Homooctamer and homotetramer. It depends on biotin as a cofactor. Mg(2+) serves as cofactor. Mn(2+) is required as a cofactor. In terms of tissue distribution, expressed in retina, brain and liver. Little or no detectable expression in breast muscle, pancreas and spleen.

It is found in the cytoplasm. It localises to the mitochondrion. The catalysed reaction is L-glutamate + NH4(+) + ATP = L-glutamine + ADP + phosphate + H(+). It carries out the reaction L-glutamate + H(+) = 4-aminobutanoate + CO2. Glutamate to glutamine ratio influences catalytic activity. At glutamate to glutamine ratios greater than 4, decarboxylase activity ceases. In the presence of manganese, synthetase activity is limited to concentrations between 10 mM and 20 mM, whereas decarboxylase activity is not affected. Both catalytic activities are inhibited by avidin. Its function is as follows. Glutamine synthetase that catalyzes the ATP-dependent conversion of glutamate and ammonia to glutamine. When expressed in liver, it may be involved in detoxifying intramitochondrially generated ammonia. Also acts as glutamate decarboxylase by catalyzing the production of 4-aminobutanoate (gamma-aminobutyric acid, GABA) in a pyridoxal phosphate-independent manner. This is Glutamine synthetase from Gallus gallus (Chicken).